A 605-amino-acid chain; its full sequence is MYGNWGRFIRVNLSTGDIKVEEYDEELAKKWLGSRGLAIYLLLKEMDPTVDPLSPENKLIIAAGPLTGTSAPTGGRYNVVTKSPLTGFITMANSGGYFGAELKFAGYDAIVVEGKAEKPVYIYIKDEHIEIRDASHIWGKKVSETEATIRKEVGSEKVKIASIGPAGENLVKFAAIMNDGHRAAGRGGVGAVMGSKNLKAIAVEGSKTVPIADKQKFMLVVREKVNKLRNDPVAGGGLPKYGTAVLVNIINENGLYPVKNFQTGVYPYAYEQSGEAMAAKYLVRNKPCYACPIGCGRVNRLPTVGETEGPEYESVWALGANLGINDLASIIEANHMCDELGLDTISTGGTLATAMELYEKGHIKDEELGDAPPFRWGNTEVLHYYIEKIAKREGFGDKLAEGSYRLAESYGHPELSMTVKKLELPAYDPRGAEGHGLGYATNNRGGCHIKNYMISPEILGYPYKMDPHDVSDDKIKMLILFQDLTALIDSAGLCLFTTFGLGADDYRDLLNAALGWDFTTEDYLKIGERIWNAERLFNLKAGLDPARDDTLPKRFLEEPMPEGPNKGHTVRLKEMLPRYYKLRGWTEDGKIPKEKLEELGIAEFY.

The tungstopterin site is built by R76, N93, G95, R182, A183, G185, and R186. C288, C291, and C295 together coordinate [4Fe-4S] cluster. D338, L342, D343, R444, K450, D489, and L493 together coordinate tungstopterin. C494 is a [4Fe-4S] cluster binding site. Residue L495 coordinates tungstopterin.

The protein belongs to the AOR/FOR family. In terms of assembly, monomer. Homodimer. The cofactor is [4Fe-4S] cluster. Tungstopterin serves as cofactor.

The enzyme catalyses an aldehyde + 2 oxidized [2Fe-2S]-[ferredoxin] + H2O = a carboxylate + 2 reduced [2Fe-2S]-[ferredoxin] + 3 H(+). Inhibited by arsenite, iodoacetate and cyanide. Functionally, aldehyde ferredoxin oxidoreductase with a broad substrate specificity. Catalyzes the oxidation of a range of aliphatic aldehydes to their corresponding carboxylic acids. In vitro can use crotonaldehyde, acetaldehyde, formaldehyde, butyraldehyde or glyceraldehyde as substrate, using methyl viologen or ferredoxin, but not NAD(P), as the electron acceptor. Does not oxidize glucose or glyceraldehyde 3-phosphate. May be involved in a pyroglycolytic pathway. The polypeptide is Tungsten-containing aldehyde ferredoxin oxidoreductase (Pyrococcus furiosus (strain ATCC 43587 / DSM 3638 / JCM 8422 / Vc1)).